A 599-amino-acid chain; its full sequence is Aspartate--tRNA ligase (599 aa).

E180 contacts L-aspartate. An aspartate region spans residues 204–207; that stretch reads QIFK. R226 contributes to the L-aspartate binding site. Residues 226 to 228 and Q235 contribute to the ATP site; that span reads RDE. An L-aspartate-binding site is contributed by H454. E488 serves as a coordination point for ATP. R495 provides a ligand contact to L-aspartate. Position 540–543 (540–543) interacts with ATP; it reads GLDR.

It belongs to the class-II aminoacyl-tRNA synthetase family. Type 1 subfamily. As to quaternary structure, homodimer.

Its subcellular location is the cytoplasm. The catalysed reaction is tRNA(Asp) + L-aspartate + ATP = L-aspartyl-tRNA(Asp) + AMP + diphosphate. Its function is as follows. Catalyzes the attachment of L-aspartate to tRNA(Asp) in a two-step reaction: L-aspartate is first activated by ATP to form Asp-AMP and then transferred to the acceptor end of tRNA(Asp). The chain is Aspartate--tRNA ligase from Clostridium botulinum (strain Eklund 17B / Type B).